The sequence spans 205 residues: Heat shock protein beta-11 (205 aa).

In terms of domain architecture, sHSP spans 67–180 (VSPMTTFKPI…NERVIPITYT (114 aa)). The tract at residues 184–205 (KNPALQNSEPENQAVEAEAAEN) is disordered. The segment covering 192–205 (EPENQAVEAEAAEN) has biased composition (low complexity).

This sequence belongs to the small heat shock protein (HSP20) family. In terms of tissue distribution, expressed specifically in the rostral-most somites at 24 hpf. At 48 hpf, expression continues in the rostral-most somites and also in the notochord. Somite expression was restricted to the vicinity of the horizontal myoseptum. In adults, expressed in the heart.

This chain is Heat shock protein beta-11 (hspb11), found in Danio rerio (Zebrafish).